A 310-amino-acid polypeptide reads, in one-letter code: Homocysteine S-methyltransferase (310 aa).

In terms of domain architecture, Hcy-binding spans 1 to 310 (MSQNNPLRAL…ADIAALKARS (310 aa)). Residues cysteine 229, cysteine 295, and cysteine 296 each coordinate Zn(2+).

As to quaternary structure, monomer. Zn(2+) is required as a cofactor.

It catalyses the reaction S-methyl-L-methionine + L-homocysteine = 2 L-methionine + H(+). Catalyzes methyl transfer from S-methylmethionine or S-adenosylmethionine (less efficient) to homocysteine, selenohomocysteine and less efficiently selenocysteine. The polypeptide is Homocysteine S-methyltransferase (mmuM) (Escherichia coli (strain K12)).